Reading from the N-terminus, the 929-residue chain is MAYQSEYALENEMMNQLEQLGYERVTIRDNKQLLDNFRTILNERHADKLEGNPLTDKEFQRLLTMIDGKSIFESARILRDKLPLRRDDESEIYLSFLDTKSWCKNKFQVTNQVSVEDTYKARYDVTILINGLPLVQVELKRRGIDINEAFNQVKRYRKQNYTGLFRYIQMFIISNGVETRYFSNNDSELLKSHMFYWSDKQNNRINTLQSFAESFMRPCQLAKMISRYMIINETDRILMAMRPYQVYAVEALIQQATETGNNGYVWHTTGSGKTLTSFKASQILSQQDDIKKVIFLVDRKDLDSQTEEEFNKFAKGAVDKTFNTSQLVRQLNDKSLPLIVTTIQKMAKAIQGNAPLLEQYKTNKVVFIIDECHRSQFGDMHRLVKQHFKNAQYFGFTGTPRFPENSSQDGRTTADIFGRCLHTYLIRDAIHDGNVLGFSVDYINTFKNKALKAEDNSMVEAIDTEEVWLADKRVELVTRHIINNHDKYTRNRQYSSIFTVQSIHALIKYYETFKRLNKKLEQPLTIAGIFTFKPNEDDRDGEVPYHSREKLEIMISDYNKKFETNFSTDTTNEYFNHISKNVKKGVKDSKIDILIVVNMFLTGFDSKVLNTLYVDKNLMYHDLIQAYSRTNRVEKESKPFGKIVNYRDLKKETDDALRVFSQTNDTDTILMRSYEEYKKEFMDAYRELKMIVPTPHMVDDIQDEEELKRFVEAYRLLAKIILRLKAFDEFEFTIDEIGMDEQENEDYKSKYLAVYDQVKRATAEKNKVSILNDIDFEIEMMRNDTINVNYIMNILRQIDLEDKAEQRRNQEQIRRILDHADDPTLRLKRDLIREFIDNVVPSLNKDDDIDQEYVNFESIKKEAEFKGFAGERSIDEQALKTISNDYQYSGVVNPHHLKKMIGDLPLKEKRKARKAIESFVAETTEKYGV.

Residues 254-418 form the Helicase ATP-binding domain; sequence QQATETGNNG…DGRTTADIFG (165 aa). 268 to 274 is a binding site for ATP; it reads TTGSGKT.

It belongs to the HsdR family. The type I restriction/modification system is composed of three polypeptides R, M and S.

It carries out the reaction Endonucleolytic cleavage of DNA to give random double-stranded fragments with terminal 5'-phosphates, ATP is simultaneously hydrolyzed.. The restriction (R) subunit of a type I restriction enzyme that recognizes an undetermined sequence and cleaves a random distance away. Subunit R is required for both nuclease and ATPase activities, but not for modification. After locating a non-methylated recognition site, the enzyme complex serves as a molecular motor that translocates DNA in an ATP-dependent manner until a collision occurs that triggers cleavage. In Staphylococcus aureus (strain COL), this protein is Type I restriction enzyme SauCOLORF180P endonuclease subunit.